A 937-amino-acid polypeptide reads, in one-letter code: Coiled-coil domain-containing protein 39 (937 aa).

4 coiled-coil regions span residues 16-137 (AIPV…CQMN), 165-339 (QQDD…KKDI), 365-615 (EKTL…SQIR), and 664-816 (VIKA…LKQT). The disordered stretch occupies residues 866 to 937 (LPTARGPSSR…NIPKEKKLSK (72 aa)). Over residues 873-887 (SSRSSSQSSSLSSFR) the composition is skewed to low complexity. 2 positions are modified to phosphoserine: S888 and S896. Residues 915–928 (NDSSRSASSGSNSN) are compositionally biased toward low complexity.

It belongs to the CCDC39 family. As to expression, strongly expressed in tissues rich in ciliated cells. Expressed in olfactory and vomeronasal sensory neurons and the respiratory epithelium. Expressed in node cells carrying motile cilia, in upper and lower airways, and in ependymal and choroid plexus cells.

The protein localises to the cytoplasm. The protein resides in the cytoskeleton. Its subcellular location is the cilium axoneme. In terms of biological role, required for assembly of dynein regulatory complex (DRC) and inner dynein arm (IDA) complexes, which are responsible for ciliary beat regulation, thereby playing a central role in motility in cilia and flagella. Probably acts together with CCDC40 to form a molecular ruler that determines the 96 nanometer (nm) repeat length and arrangements of components in cilia and flagella. Not required for outer dynein arm complexes assembly. The sequence is that of Coiled-coil domain-containing protein 39 from Mus musculus (Mouse).